The primary structure comprises 189 residues: Glucose-6-phosphate isomerase (189 aa).

4 residues coordinate Fe cation: histidine 88, histidine 90, glutamate 97, and histidine 136.

The protein belongs to the archaeal-type GPI family. In terms of assembly, homodimer. Requires Fe cation as cofactor.

The protein resides in the cytoplasm. It catalyses the reaction alpha-D-glucose 6-phosphate = beta-D-fructose 6-phosphate. It participates in carbohydrate degradation; glycolysis; D-glyceraldehyde 3-phosphate and glycerone phosphate from D-glucose: step 2/4. This Pyrococcus abyssi (strain GE5 / Orsay) protein is Glucose-6-phosphate isomerase (pgiA).